We begin with the raw amino-acid sequence, 1052 residues long: Multidrug resistance protein MdtB (1052 aa).

A run of 11 helical transmembrane segments spans residues 15–37 (LFILRPVATTLFMIAILLAGIIG), 345–362 (FELLLAIALVVMVIYLFL), 367–389 (ATIIPSIAVPLSLVGTFAAMYFL), 396–418 (LTLMALTIATGFVVDDAIVVIEN), 438–460 (GEIGFTIISLTFSLIAVLIPLLF), 472–494 (FAVTLAVAILISAVVSLTLTPMM), 535–557 (HPWLTLSVAFSTLVLTVILYLLI), 867–889 (LWLIIAAIVAMYIVLGVLYESFI), 909–931 (LMLTGNELDVIAIIGIILLIGIV), 968–990 (ILMTTLAALFGALPLMLSTGVGA), and 1000–1022 (MVGGLIVSQVLTLFTTPVIYLLF). The segment at 1032–1052 (KNRHRDEDIDSSELLNGQEPQ) is disordered.

This sequence belongs to the resistance-nodulation-cell division (RND) (TC 2.A.6) family. MdtB subfamily. Part of a tripartite efflux system composed of MdtA, MdtB and MdtC. MdtB forms a heteromultimer with MdtC.

Its subcellular location is the cell inner membrane. This Yersinia pseudotuberculosis serotype I (strain IP32953) protein is Multidrug resistance protein MdtB.